The sequence spans 182 residues: ATP-dependent protease subunit HslV (182 aa).

The active site involves threonine 2. Na(+) contacts are provided by glycine 157, cysteine 160, and threonine 163.

The protein belongs to the peptidase T1B family. HslV subfamily. A double ring-shaped homohexamer of HslV is capped on each side by a ring-shaped HslU homohexamer. The assembly of the HslU/HslV complex is dependent on binding of ATP.

It localises to the cytoplasm. It catalyses the reaction ATP-dependent cleavage of peptide bonds with broad specificity.. Its activity is regulated as follows. Allosterically activated by HslU binding. Its function is as follows. Protease subunit of a proteasome-like degradation complex believed to be a general protein degrading machinery. This is ATP-dependent protease subunit HslV from Vibrio atlanticus (strain LGP32) (Vibrio splendidus (strain Mel32)).